The sequence spans 323 residues: Lipoyl synthase (323 aa).

[4Fe-4S] cluster is bound by residues C56, C61, C67, C82, C86, C89, and S293. The region spanning W68 to A282 is the Radical SAM core domain.

The protein belongs to the radical SAM superfamily. Lipoyl synthase family. The cofactor is [4Fe-4S] cluster.

It localises to the cytoplasm. It catalyses the reaction [[Fe-S] cluster scaffold protein carrying a second [4Fe-4S](2+) cluster] + N(6)-octanoyl-L-lysyl-[protein] + 2 oxidized [2Fe-2S]-[ferredoxin] + 2 S-adenosyl-L-methionine + 4 H(+) = [[Fe-S] cluster scaffold protein] + N(6)-[(R)-dihydrolipoyl]-L-lysyl-[protein] + 4 Fe(3+) + 2 hydrogen sulfide + 2 5'-deoxyadenosine + 2 L-methionine + 2 reduced [2Fe-2S]-[ferredoxin]. It participates in protein modification; protein lipoylation via endogenous pathway; protein N(6)-(lipoyl)lysine from octanoyl-[acyl-carrier-protein]: step 2/2. Its function is as follows. Catalyzes the radical-mediated insertion of two sulfur atoms into the C-6 and C-8 positions of the octanoyl moiety bound to the lipoyl domains of lipoate-dependent enzymes, thereby converting the octanoylated domains into lipoylated derivatives. In Acidothermus cellulolyticus (strain ATCC 43068 / DSM 8971 / 11B), this protein is Lipoyl synthase.